Reading from the N-terminus, the 408-residue chain is Phosphoglycerate kinase (408 aa).

Residues 24–26 (DLN), Arg40, 63–66 (HLGR), Arg122, and Arg166 each bind substrate. Residues Lys216, Gly304, Glu335, and 364 to 367 (GGDS) contribute to the ATP site.

It belongs to the phosphoglycerate kinase family. As to quaternary structure, monomer.

The protein resides in the cytoplasm. It catalyses the reaction (2R)-3-phosphoglycerate + ATP = (2R)-3-phospho-glyceroyl phosphate + ADP. It functions in the pathway carbohydrate degradation; glycolysis; pyruvate from D-glyceraldehyde 3-phosphate: step 2/5. The protein is Phosphoglycerate kinase of Mycolicibacterium smegmatis (strain ATCC 700084 / mc(2)155) (Mycobacterium smegmatis).